A 119-amino-acid chain; its full sequence is uncharacterized protein (119 aa).

2 helical membrane-spanning segments follow: residues 57–77 and 80–100; these read FSHH…SILF and YIFV…FILH.

The protein localises to the membrane. This is an uncharacterized protein from Saccharomyces cerevisiae (strain ATCC 204508 / S288c) (Baker's yeast).